We begin with the raw amino-acid sequence, 77 residues long: NAD(P)H-quinone oxidoreductase subunit L (77 aa).

Transmembrane regions (helical) follow at residues 12 to 32 and 47 to 67; these read FVAYVGIISIYLFVIPLILFY and LGVYGLVFLFFPGLILFSPFL.

The protein belongs to the complex I NdhL subunit family. In terms of assembly, NDH-1 can be composed of about 15 different subunits; different subcomplexes with different compositions have been identified which probably have different functions.

It is found in the cellular thylakoid membrane. It catalyses the reaction a plastoquinone + NADH + (n+1) H(+)(in) = a plastoquinol + NAD(+) + n H(+)(out). The enzyme catalyses a plastoquinone + NADPH + (n+1) H(+)(in) = a plastoquinol + NADP(+) + n H(+)(out). In terms of biological role, NDH-1 shuttles electrons from an unknown electron donor, via FMN and iron-sulfur (Fe-S) centers, to quinones in the respiratory and/or the photosynthetic chain. The immediate electron acceptor for the enzyme in this species is believed to be plastoquinone. Couples the redox reaction to proton translocation, and thus conserves the redox energy in a proton gradient. Cyanobacterial NDH-1 also plays a role in inorganic carbon-concentration. The chain is NAD(P)H-quinone oxidoreductase subunit L from Prochlorococcus marinus (strain MIT 9515).